The following is a 339-amino-acid chain: Probable cytosolic iron-sulfur protein assembly protein CIAO1 (339 aa).

7 WD repeats span residues 14-53, 59-98, 103-142, 148-187, 192-231, 250-289, and 301-339; these read HPDS…WICK, GHQR…FECV, GHEN…EYEC, SHTQ…WVCC, GHES…NEQG, FHSR…DPQQ, and AHSQ…PEGL. An LYR motif; required for interaction with HSC20 motif is present at residues 176–178; it reads LYR.

Belongs to the WD repeat CIA1 family. As to quaternary structure, component of the CIA complex. Interacts with CIAO2A and forms a complex with CIAO2B and MMS19; the interactions with CIAO2A and CIAO2B are mutually exclusive. Interacts with CHD1L, ERCC2, IREB2 and POLD1. Component of the MMXD complex, which includes CIAO1, ERCC2, CIAO2B, MMS19 and SLC25A5. Interacts with WT1. Interacts with CIAO3. Interacts (via LYR motif) with HSC20.

It localises to the cytoplasm. In terms of biological role, key component of the cytosolic iron-sulfur protein assembly (CIA) complex, a multiprotein complex that mediates the incorporation of iron-sulfur cluster into extramitochondrial Fe/S proteins. As a CIA complex component, interacts specifically with CIAO2A or CIAO2B and MMS19 to assist different branches of iron-sulfur protein assembly, depending of its interactors. The complex CIAO1:CIAO2B:MMS19 binds to and facilitates the assembly of most cytosolic-nuclear Fe/S proteins. CIAO1:CIAO2A specifically matures ACO1 and stabilizes IREB2. Seems to specifically modulate the transactivation activity of WT1. As part of the mitotic spindle-associated MMXD complex it may play a role in chromosome segregation. The chain is Probable cytosolic iron-sulfur protein assembly protein CIAO1 from Homo sapiens (Human).